The primary structure comprises 379 residues: Neutral protease 2 homolog TRV_03208 (379 aa).

The N-terminal stretch at 1–19 (MKFFTALAAVGALLAPALA) is a signal peptide. The propeptide occupies 20-187 (LPTPASEEAS…DYFSKSLDKR (168 aa)). Disulfide bonds link Cys-193/Cys-263 and Cys-270/Cys-288. An N-linked (GlcNAc...) asparagine glycan is attached at Asn-221. Residue His-312 coordinates Zn(2+). The active site involves Glu-313. Zn(2+) is bound by residues His-316 and Asp-327.

This sequence belongs to the peptidase M35 family. Zn(2+) serves as cofactor.

Its subcellular location is the secreted. The enzyme catalyses Preferential cleavage of bonds with hydrophobic residues in P1'. Also 3-Asn-|-Gln-4 and 8-Gly-|-Ser-9 bonds in insulin B chain.. Its function is as follows. Secreted metalloproteinase that allows assimilation of proteinaceous substrates. Shows high activities on basic nuclear substrates such as histone and protamine. May be involved in virulence. The protein is Neutral protease 2 homolog TRV_03208 of Trichophyton verrucosum (strain HKI 0517).